The sequence spans 429 residues: Growth/differentiation factor 2 (429 aa).

Residues 1–22 (MCPGALWVALPLLSLLAGSLQG) form the signal peptide. Residues 23–319 (KPLQSWGRGS…AGSTLARRKR (297 aa)) constitute a propeptide that is removed on maturation. Asn71 and Asn136 each carry an N-linked (GlcNAc...) asparagine glycan. The span at 283-301 (VLKKLSKDGSTEAGESSHE) shows a compositional bias: basic and acidic residues. The segment at 283 to 308 (VLKKLSKDGSTEAGESSHEEDTDGHV) is disordered. 3 cysteine pairs are disulfide-bonded: Cys327–Cys393, Cys356–Cys426, and Cys360–Cys428. Residues 402–416 (SVLYKDDMGVPTLKY) are interaction with ENG.

It belongs to the TGF-beta family. As to quaternary structure, homodimer; disulfide-linked. Detected in extracellular fluid as mature homodimer, and in complex with its propeptide. Interacts with ACVRL1, BMPR2 and ACVR2B with high affinity (in vitro). Identified in a complex with ACVRL1 and ACVR2B. Has ten times lower affinity for ACVR2A (in vitro). Interacts with ENG, forming a heterotetramer with a 2:2 stoichiometry. Can form a heteromeric complex with ENG and ACVRL1. Interacts with type I receptor ACVR1. Post-translationally, a reversible disulfide bond can be formed between the two subunits in the homodimer; this has no effect on GDF2 activity. In terms of tissue distribution, detected in blood plasma (at protein level).

It localises to the secreted. Its function is as follows. Potent circulating inhibitor of angiogenesis. Signals through the type I activin receptor ACVRL1 but not other Alks. Signaling through SMAD1 in endothelial cells requires TGF-beta coreceptor endoglin/ENG. The polypeptide is Growth/differentiation factor 2 (GDF2) (Homo sapiens (Human)).